The following is a 619-amino-acid chain: Putative transcription activator BRLF1 homolog (619 aa).

2 disordered regions span residues 301 to 389 (LRDS…ETQS) and 563 to 603 (GLVS…SDEM). 2 stretches are compositionally biased toward low complexity: residues 371–389 (EAPQAASQTQPTTTQETQS) and 567–582 (QQQAPAPPQNDQGGPP). Over residues 589 to 598 (QEQQQSSTDP) the composition is skewed to polar residues.

The protein belongs to the herpesviridae TAF50 family.

Transcription activation. The chain is Putative transcription activator BRLF1 homolog (50) from Connochaetes taurinus (Blue wildebeest).